The primary structure comprises 307 residues: NAD kinase 1 (307 aa).

Catalysis depends on Asp-67, which acts as the Proton acceptor. Residues 67–68, 149–150, Arg-179, and Asp-181 each bind NAD(+); these read DG and ND.

This sequence belongs to the NAD kinase family. A divalent metal cation is required as a cofactor.

It localises to the cytoplasm. The enzyme catalyses NAD(+) + ATP = ADP + NADP(+) + H(+). In terms of biological role, involved in the regulation of the intracellular balance of NAD and NADP, and is a key enzyme in the biosynthesis of NADP. Catalyzes specifically the phosphorylation on 2'-hydroxyl of the adenosine moiety of NAD to yield NADP. This is NAD kinase 1 from Prochlorococcus marinus (strain SARG / CCMP1375 / SS120).